Consider the following 444-residue polypeptide: Methylenetetrahydrofolate--tRNA-(uracil-5-)-methyltransferase TrmFO (444 aa).

9–14 (GAGMAG) contacts FAD.

The protein belongs to the MnmG family. TrmFO subfamily. FAD serves as cofactor.

The protein localises to the cytoplasm. The catalysed reaction is uridine(54) in tRNA + (6R)-5,10-methylene-5,6,7,8-tetrahydrofolate + NADH + H(+) = 5-methyluridine(54) in tRNA + (6S)-5,6,7,8-tetrahydrofolate + NAD(+). The enzyme catalyses uridine(54) in tRNA + (6R)-5,10-methylene-5,6,7,8-tetrahydrofolate + NADPH + H(+) = 5-methyluridine(54) in tRNA + (6S)-5,6,7,8-tetrahydrofolate + NADP(+). In terms of biological role, catalyzes the folate-dependent formation of 5-methyl-uridine at position 54 (M-5-U54) in all tRNAs. The chain is Methylenetetrahydrofolate--tRNA-(uracil-5-)-methyltransferase TrmFO from Cereibacter sphaeroides (strain ATCC 17029 / ATH 2.4.9) (Rhodobacter sphaeroides).